Reading from the N-terminus, the 428-residue chain is Enolase (428 aa).

(2R)-2-phosphoglycerate is bound at residue Q163. E205 (proton donor) is an active-site residue. Positions 242, 285, and 312 each coordinate Mg(2+). Residues K337, R366, S367, and K388 each contribute to the (2R)-2-phosphoglycerate site. The active-site Proton acceptor is K337.

The protein belongs to the enolase family. The cofactor is Mg(2+).

It is found in the cytoplasm. Its subcellular location is the secreted. It localises to the cell surface. The catalysed reaction is (2R)-2-phosphoglycerate = phosphoenolpyruvate + H2O. It participates in carbohydrate degradation; glycolysis; pyruvate from D-glyceraldehyde 3-phosphate: step 4/5. Its function is as follows. Catalyzes the reversible conversion of 2-phosphoglycerate (2-PG) into phosphoenolpyruvate (PEP). It is essential for the degradation of carbohydrates via glycolysis. In Nitrosomonas europaea (strain ATCC 19718 / CIP 103999 / KCTC 2705 / NBRC 14298), this protein is Enolase.